The chain runs to 375 residues: Growth/differentiation factor 8 (375 aa).

The N-terminal stretch at 1–18 (MQRLQICVYIYLFVLIVA) is a signal peptide. Residues 19–266 (GPVDLSENSE…VTDTPKRSRR (248 aa)) constitute a propeptide that is removed on maturation. Asparagine 71 carries an N-linked (GlcNAc...) asparagine glycan. Disulfide bonds link cysteine 272–cysteine 282, cysteine 281–cysteine 340, cysteine 309–cysteine 372, and cysteine 313–cysteine 374.

It belongs to the TGF-beta family. Homodimer; disulfide-linked. Interacts with WFIKKN2, leading to inhibit its activity. Interacts with FSTL3. In terms of processing, synthesized as large precursor molecule that undergoes proteolytic cleavage to generate an N-terminal propeptide and a disulfide linked C-terminal dimer, which is the biologically active molecule. The circulating form consists of a latent complex of the C-terminal dimer and other proteins, including its propeptide, which maintain the C-terminal dimer in a latent, inactive state. Ligand activation requires additional cleavage of the prodomain by a tolloid-like metalloproteinase.

The protein resides in the secreted. Its function is as follows. Acts specifically as a negative regulator of skeletal muscle growth. The chain is Growth/differentiation factor 8 (MSTN) from Canis lupus familiaris (Dog).